We begin with the raw amino-acid sequence, 770 residues long: Signal transducer and activator of transcription 3 (770 aa).

Position 2 is an N-acetylalanine (Ala2). Lys49 and Lys87 each carry N6-acetyllysine. The Essential for nuclear import signature appears at 150 to 162; sequence DVRKRVQDLEQKM. The SH2 domain occupies 580-670; it reads WNEGYIMGFI…DATNILVSPL (91 aa). Residues Lys601, Lys615, and Lys631 each carry the allysine; alternate modification. N6-acetyllysine; alternate is present on residues Lys601, Lys615, and Lys631. Phosphotyrosine; by TYK2 is present on Tyr640. Lys685 is modified (allysine; alternate). N6-acetyllysine; alternate is present on Lys685. At Tyr705 the chain carries Phosphotyrosine; by FER and PTK6. N6-acetyllysine is present on Lys707. Phosphothreonine is present on Thr714. Ser727 carries the phosphoserine; by DYRK2, NLK, NEK6, IRAK1, RPS6KA5, ZIPK/DAPK3 and PKC/PRKCE modification.

The protein belongs to the transcription factor STAT family. Forms a homodimer or a heterodimer with a related family member (at least STAT1). Component of a promoter-binding complex composed of STAT3, NFATC3 and NFATC4; complex formation is enhanced by calcineurin. Interacts with IL31RA, NCOA1, PELP1, SIPAR, SOCS7, STATIP1 and TMF1. Interacts with IL23R in presence of IL23. Interacts (via SH2 domain) with NLK. Interacts with ARL2BP; the interaction is enhanced by LIF and JAK1 expression. Interacts with KPNA4 and KPNA5; KPNA4 may be the primary mediator of nuclear import. Interacts with CAV2; the interaction is increased on insulin-induced tyrosine phosphorylation of CAV2 and leads to STAT3 activation. Interacts with ARL2BP; interaction is enhanced with ARL2. Interacts with NEK6. Binds to CDK9 when activated and nuclear. Interacts with BMX. Interacts with ZIPK/DAPK3. Interacts with PIAS3; the interaction occurs on stimulation by IL6, CNTF or OSM and inhibits the DNA binding activity of STAT3. In prostate cancer cells, interacts with PRKCE and promotes DNA binding activity of STAT3. Interacts with STMN3, antagonizing its microtubule-destabilizing activity. Interacts with the 'Lys-129' acetylated form of BIRC5/survivin. Interacts with FER. Interacts (via SH2 domain) with EIF2AK2/PKR (via the kinase catalytic domain). Interacts with FGFR4. Interacts with INPP5F; the interaction is independent of STAT3 Tyr-705 phosphorylation status. Interacts with OCIAD1 and OCIAD2. Interacts (unphosphorylated or phosphorylated at Ser-727) with PHB1. Interacts and may form heterodimers with NHLH1. Found in a complex with SLC39A6, SLC39A10 and with the 'Ser-727' phosphorylated form of STAT3 throughout mitosis. Interacts (when acetylated) with EP300 (via bromo domain); interaction takes place following STAT3 acetylation by EP300 and promotes enhanceosome assembly. Interacts (when acetylated) with BRD2 (via bromo domain); interaction promotes STAT3 recruitment to chromatin and T-helper Th17 cell differentiation. Interacts with FAM220A/SIPAR; the interaction occurs in both the nucleus and the cytoplasm, is enhanced by IL6 and promotes STAT3 dephosphorylation. Interacts in both unphosphorylated and phosphorylated forms with FAM220A but interacts preferentially in the phosphorylated form in the nucleus. Interacts with PTPN2; the interaction is promoted by FAM220A and leads to STAT3 dephosphorylation which negatively regulates STAT3 transcriptional activator activity. Activated through tyrosine phosphorylation by BMX. Tyrosine phosphorylated in response to IL-6, IL-11, CNTF, LIF, CSF-1, EGF, PDGF, IFN-alpha and OSM. Tyrosine phosphorylated in response to constitutively activated FGFR1, FGFR2, FGFR3 and FGFR4. Phosphorylated on serine upon DNA damage, probably by ATM or ATR. Serine phosphorylation is important for the formation of stable DNA-binding STAT3 homodimers and maximal transcriptional activity. ARL2BP may participate in keeping the phosphorylated state of STAT3 within the nucleus. Tyrosine phosphorylated upon stimulation with EGF. Upon LPS challenge, phosphorylated within the nucleus by IRAK1. Phosphorylated on Ser-727 by RPS6KA5. Dephosphorylation on tyrosine residues by PTPN2 negatively regulates IL6/interleukin-6 signaling. Phosphorylation at Tyr-705 by FER, isoform M2 of PKM (PKM2) or PTK6 leads to an increase of its transcriptional activity. Phosphorylation at Tyr-705 is increased in the presence of calcineurin. Phosphorylation at Tyr-640 by TYK2 negatively regulates transcriptional activity. Post-translationally, acetylated on lysine residues by EP300/p300, promoting its activation. Acetylation at Lys-49 and Lys-87 by EP300/p300 promotes its activation. Acetylation at Lys-87 by EP300/p300 promotes its association with BRD2 and recruitment to chromatin. Deacetylated at Lys-49 and Lys-87 by HDAC1. Acetylation at Lys-685 by EP300/p300 promotes its homodimerization and activation. Deacetylated at Lys-685 by HDAC3. Acetylated on lysine residues by CREBBP. Deacetylation by LOXL3 leads to disrupt STAT3 dimerization and inhibit STAT3 transcription activity. Oxidation of lysine residues to allysine on STAT3 preferentially takes place on lysine residues that are acetylated. In terms of processing, some lysine residues are oxidized to allysine by LOXL3, leading to disrupt STAT3 dimerization and inhibit STAT3 transcription activity. Oxidation of lysine residues to allysine on STAT3 preferentially takes place on lysine residues that are acetylated.

The protein resides in the cytoplasm. The protein localises to the nucleus. Functionally, signal transducer and transcription activator that mediates cellular responses to interleukins, KITLG/SCF, LEP and other growth factors. Once activated, recruits coactivators, such as NCOA1 or MED1, to the promoter region of the target gene. May mediate cellular responses to activated FGFR1, FGFR2, FGFR3 and FGFR4. Upon activation of IL6ST/gp130 signaling by interleukin-6 (IL6), binds to the IL6-responsive elements identified in the promoters of various acute-phase protein genes. Activated by IL31 through IL31RA. Acts as a regulator of inflammatory response by regulating differentiation of naive CD4(+) T-cells into T-helper Th17 or regulatory T-cells (Treg): acetylation promotes its transcription activity and cell differentiation while deacetylation and oxidation of lysine residues by LOXL3 inhibits differentiation. Involved in cell cycle regulation by inducing the expression of key genes for the progression from G1 to S phase, such as CCND1. Mediates the effects of LEP on melanocortin production, body energy homeostasis and lactation. May play an apoptotic role by transctivating BIRC5 expression under LEP activation. Cytoplasmic STAT3 represses macroautophagy by inhibiting EIF2AK2/PKR activity. Plays a crucial role in basal beta cell functions, such as regulation of insulin secretion. Following JAK/STAT signaling activation and as part of a complex with NFATC3 and NFATC4, binds to the alpha-beta E4 promoter region of CRYAB and activates transcription in cardiomyocytes. Plays an important role in host defense in methicillin-resistant S.aureus lung infection by regulating the expression of the antimicrobial lectin REG3G. The sequence is that of Signal transducer and activator of transcription 3 (STAT3) from Bos taurus (Bovine).